The sequence spans 541 residues: ATP synthase subunit alpha (541 aa).

ATP is bound at residue 169–176; that stretch reads GDRQTGKT. The segment at 506 to 541 is disordered; sequence NTLLNVEEGDTGEEENNEGHNKAEQDTEEKDTEEVV. Composition is skewed to acidic residues over residues 512–521 and 531–541; these read EEGDTGEEEN and DTEEKDTEEVV.

It belongs to the ATPase alpha/beta chains family. As to quaternary structure, F-type ATPases have 2 components, CF(1) - the catalytic core - and CF(0) - the membrane proton channel. CF(1) has five subunits: alpha(3), beta(3), gamma(1), delta(1), epsilon(1). CF(0) has three main subunits: a(1), b(2) and c(9-12). The alpha and beta chains form an alternating ring which encloses part of the gamma chain. CF(1) is attached to CF(0) by a central stalk formed by the gamma and epsilon chains, while a peripheral stalk is formed by the delta and b chains.

It is found in the cell inner membrane. It catalyses the reaction ATP + H2O + 4 H(+)(in) = ADP + phosphate + 5 H(+)(out). In terms of biological role, produces ATP from ADP in the presence of a proton gradient across the membrane. The alpha chain is a regulatory subunit. The protein is ATP synthase subunit alpha of Halothermothrix orenii (strain H 168 / OCM 544 / DSM 9562).